The following is a 487-amino-acid chain: Chromosomal replication initiator protein DnaA (487 aa).

The domain I, interacts with DnaA modulators stretch occupies residues 1 to 92 (MTIKGGVVSQ…SELWTANDAT (92 aa)). Positions 92 to 144 (TGRRLDLKSRLEFESVGGAGYEAKAEPIEIVLPVSSDVPALAPTNGSKPSPVQ) are domain II. The domain III, AAA+ region stretch occupies residues 145 to 367 (GLQERFTFDT…GALNTLSARA (223 aa)). Residues Gly189, Gly191, Lys192, and Thr193 each coordinate ATP. The interval 368–487 (GEGVSRLTLE…LETITRKLRG (120 aa)) is domain IV, binds dsDNA.

It belongs to the DnaA family. In terms of assembly, oligomerizes as a right-handed, spiral filament on DNA at oriC.

Its subcellular location is the cytoplasm. In terms of biological role, plays an essential role in the initiation and regulation of chromosomal replication. ATP-DnaA binds to the origin of replication (oriC) to initiate formation of the DNA replication initiation complex once per cell cycle. Binds the DnaA box (a 9 base pair repeat at the origin) and separates the double-stranded (ds)DNA. Forms a right-handed helical filament on oriC DNA; dsDNA binds to the exterior of the filament while single-stranded (ss)DNA is stabiized in the filament's interior. The ATP-DnaA-oriC complex binds and stabilizes one strand of the AT-rich DNA unwinding element (DUE), permitting loading of DNA polymerase. After initiation quickly degrades to an ADP-DnaA complex that is not apt for DNA replication. Binds acidic phospholipids. This is Chromosomal replication initiator protein DnaA from Caulobacter sp. (strain K31).